The chain runs to 120 residues: ESAT-6-like protein EsxQ (120 aa).

Belongs to the WXG100 family. ESAT-6 subfamily.

The protein localises to the secreted. The protein is ESAT-6-like protein EsxQ of Mycobacterium bovis (strain ATCC BAA-935 / AF2122/97).